Consider the following 390-residue polypeptide: 2-deoxy-scyllo-inosose synthase (390 aa).

Residues Asp-42, 73–76 (EQNK), 105–109 (GVTGN), 129–130 (TT), 140–142 (SLK), and 151–152 (KN) contribute to the NAD(+) site. Lys-142 is a catalytic residue. Residue Glu-184 coordinates Co(2+). Glu-244 is a catalytic residue. Residues His-247 and His-263 each coordinate Co(2+). A disordered region spans residues 371–390 (PPRPAAARTDDAATVLGGAG).

Belongs to the sugar phosphate cyclases superfamily. DOI synthase family. NAD(+) serves as cofactor. It depends on Co(2+) as a cofactor.

The catalysed reaction is D-glucose 6-phosphate = 2-deoxy-L-scyllo-inosose + phosphate. Its pathway is metabolic intermediate biosynthesis; 2-deoxystreptamine biosynthesis; 2-deoxystreptamine from D-glucose 6-phosphate: step 1/4. It participates in antibiotic biosynthesis; kanamycin biosynthesis. In terms of biological role, catalyzes the intramolecular carbocycle formation from D-glucose-6-phosphate to 2-deoxy-scyllo-inosose (DOI). This is 2-deoxy-scyllo-inosose synthase (kanC) from Streptomyces kanamyceticus.